The following is a 218-amino-acid chain: MKMIEQHNQEYREGKHSFTMAMNAFGEMTSEEFRQVVNGFQNQKHRKGKVLQEPLLHDIRKSVDWREKGYVTPVKDQCNWGSVRTDVRKTEKLVSLSVQTWWTALGFKAMLAAFLENHYFASSMLPTMEAWTLRKPFHMKKSSGDWKVQGHRGASGESLLASGESQQSPEVAQYSGKHQVQCHLIEEALQMLSGGDEDHDEDKWPHDMRNHLAGEAQV.

2 disordered regions span residues 144–173 (GDWK…EVAQ) and 195–218 (GDED…EAQV). The span at 201–212 (EDKWPHDMRNHL) shows a compositional bias: basic and acidic residues.

This sequence belongs to the peptidase C1 family.

This chain is Putative inactive cathepsin L-like protein CTSL3P (CTSL3P), found in Homo sapiens (Human).